We begin with the raw amino-acid sequence, 148 residues long: Cytochrome c-552 (148 aa).

The signal sequence occupies residues 1–17 (MKRTLMAFLLLGGLALA). Q18 is subject to Pyrrolidone carboxylic acid. Heme c-binding residues include C28, C31, H32, and M86.

Binds 1 heme c group covalently per subunit.

Functionally, this monoheme basic protein appears to function as an electron donor to cytochrome oxidase in T.thermophilus. This Thermus thermophilus (strain ATCC 27634 / DSM 579 / HB8) protein is Cytochrome c-552 (cycA).